The primary structure comprises 204 residues: Pyridoxamine 5'-phosphate oxidase YLR456W homolog (204 aa).

FMN-binding positions include 65-66 and Asn127; that span reads FT.

This sequence belongs to the pyridoxamine 5'-phosphate oxidase family. The cofactor is FMN.

The protein localises to the cytoplasm. It is found in the nucleus. The chain is Pyridoxamine 5'-phosphate oxidase YLR456W homolog from Saccharomyces cerevisiae (strain ATCC 204508 / S288c) (Baker's yeast).